The primary structure comprises 225 residues: MAKVRFGIVVFPGSNCDRDVAWVTRGLLGCPTRLIWHRETDLSGLDVVVLPGGFSYGDYLRAGALARFAPVMGSLAEHGARGGYVLGICNGFQILTEAGLLPGALVRNANLHFICDRVGIRVERQDLPWTSAYPCGATLTLPIAHGEGRYVCDADTLKQLQDRGQIVFRYAPVAPNGSVDNIAGICDPSGRILGLMPHPERAADPDLPGQDGIPFWQSIVQSLAG.

Residues 5–225 (RFGIVVFPGS…WQSIVQSLAG (221 aa)) form the Glutamine amidotransferase type-1 domain. Catalysis depends on Cys89, which acts as the Nucleophile. Catalysis depends on residues His198 and Glu200.

Part of the FGAM synthase complex composed of 1 PurL, 1 PurQ and 2 PurS subunits.

It is found in the cytoplasm. The catalysed reaction is N(2)-formyl-N(1)-(5-phospho-beta-D-ribosyl)glycinamide + L-glutamine + ATP + H2O = 2-formamido-N(1)-(5-O-phospho-beta-D-ribosyl)acetamidine + L-glutamate + ADP + phosphate + H(+). It carries out the reaction L-glutamine + H2O = L-glutamate + NH4(+). Its pathway is purine metabolism; IMP biosynthesis via de novo pathway; 5-amino-1-(5-phospho-D-ribosyl)imidazole from N(2)-formyl-N(1)-(5-phospho-D-ribosyl)glycinamide: step 1/2. Its function is as follows. Part of the phosphoribosylformylglycinamidine synthase complex involved in the purines biosynthetic pathway. Catalyzes the ATP-dependent conversion of formylglycinamide ribonucleotide (FGAR) and glutamine to yield formylglycinamidine ribonucleotide (FGAM) and glutamate. The FGAM synthase complex is composed of three subunits. PurQ produces an ammonia molecule by converting glutamine to glutamate. PurL transfers the ammonia molecule to FGAR to form FGAM in an ATP-dependent manner. PurS interacts with PurQ and PurL and is thought to assist in the transfer of the ammonia molecule from PurQ to PurL. In Synechococcus sp. (strain JA-3-3Ab) (Cyanobacteria bacterium Yellowstone A-Prime), this protein is Phosphoribosylformylglycinamidine synthase subunit PurQ.